The primary structure comprises 1755 residues: Transposon Ty1-JR1 Gag-Pol polyprotein (1755 aa).

A compositionally biased stretch (low complexity) spans 1 to 16; sequence MESQQLSQHSHISHGS. Disordered stretches follow at residues 1 to 93, 126 to 173, and 352 to 421; these read MESQ…MMTQ, PQSQ…RPPP, and GSRN…SKST. Composition is skewed to polar residues over residues 48 to 60 and 127 to 152; these read TKAN…TPAS and QSQF…GNTF. A compositionally biased stretch (low complexity) spans 153–165; sequence TDSSSADSDMTST. An RNA-binding region spans residues 299–401; sequence NNGIHINNKV…NSKSKTARAH (103 aa). Residues 402 to 418 are compositionally biased toward low complexity; it reads NVSTSNNSPSTDNDSIS. Ser-416 bears the Phosphoserine mark. Asp-461 (for protease activity; shared with dimeric partner) is an active-site residue. The interval 583-640 is integrase-type zinc finger-like; that stretch reads NVHTSESTRKYPYPFIHRMLAHANAQTIRYSLKNNTITYFNESDVDWSSAIDYQCPDC. Residues 660–835 enclose the Integrase catalytic domain; that stretch reads NSYEPFQYLH…AGLDISTLLP (176 aa). Asp-671 and Asp-736 together coordinate Mg(2+). 3 disordered regions span residues 956 to 1087, 1092 to 1111, and 1130 to 1186; these read SKAV…ETEK, RSPS…NIVP, and DLPL…EDNE. Residues 960 to 969 are compositionally biased toward low complexity; sequence SPTDSTPPST. The span at 1005 to 1015 shows a compositional bias: polar residues; that stretch reads STPQISNIEST. The span at 1038–1053 shows a compositional bias: basic and acidic residues; sequence ESSHASKSKDFRHSDS. 2 stretches are compositionally biased toward polar residues: residues 1054-1082 and 1101-1111; these read YSEN…QISD and PENNSSHNIVP. The short motif at 1178–1212 is the Bipartite nuclear localization signal element; it reads KKRSLEDNETEIKVSRDTWNTKNMRSLEPPRSKKR. Residues 1338-1476 form the Reverse transcriptase Ty1/copia-type domain; that stretch reads NNYYITQLDI…DILGLEIKYQ (139 aa). Mg(2+)-binding residues include Asp-1346, Asp-1427, Asp-1428, Asp-1610, Glu-1652, and Asp-1685. An RNase H Ty1/copia-type domain is found at 1610 to 1752; it reads DASYGNQPYY…IKTFKLLTNK (143 aa).

The capsid protein forms a homotrimer, from which the VLPs are assembled. The protease is a homodimer, whose active site consists of two apposed aspartic acid residues. Initially, virus-like particles (VLPs) are composed of the structural unprocessed proteins Gag and Gag-Pol, and also contain the host initiator methionine tRNA (tRNA(i)-Met) which serves as a primer for minus-strand DNA synthesis, and a dimer of genomic Ty RNA. Processing of the polyproteins occurs within the particle and proceeds by an ordered pathway, called maturation. First, the protease (PR) is released by autocatalytic cleavage of the Gag-Pol polyprotein yielding capsid protein p45 and a Pol-p154 precursor protein. This cleavage is a prerequisite for subsequent processing of Pol-p154 at the remaining sites to release the mature structural and catalytic proteins. Maturation takes place prior to the RT reaction and is required to produce transposition-competent VLPs.

The protein localises to the cytoplasm. The protein resides in the nucleus. The catalysed reaction is DNA(n) + a 2'-deoxyribonucleoside 5'-triphosphate = DNA(n+1) + diphosphate. It catalyses the reaction Endonucleolytic cleavage to 5'-phosphomonoester.. Capsid protein (CA) is the structural component of the virus-like particle (VLP), forming the shell that encapsulates the retrotransposons dimeric RNA genome. The particles are assembled from trimer-clustered units and there are holes in the capsid shells that allow for the diffusion of macromolecules. CA also has nucleocapsid-like chaperone activity, promoting primer tRNA(i)-Met annealing to the multipartite primer-binding site (PBS), dimerization of Ty1 RNA and initiation of reverse transcription. In terms of biological role, the aspartyl protease (PR) mediates the proteolytic cleavages of the Gag and Gag-Pol polyproteins after assembly of the VLP. Its function is as follows. Reverse transcriptase/ribonuclease H (RT) is a multifunctional enzyme that catalyzes the conversion of the retro-elements RNA genome into dsDNA within the VLP. The enzyme displays a DNA polymerase activity that can copy either DNA or RNA templates, and a ribonuclease H (RNase H) activity that cleaves the RNA strand of RNA-DNA heteroduplexes during plus-strand synthesis and hydrolyzes RNA primers. The conversion leads to a linear dsDNA copy of the retrotransposon that includes long terminal repeats (LTRs) at both ends. Functionally, integrase (IN) targets the VLP to the nucleus, where a subparticle preintegration complex (PIC) containing at least integrase and the newly synthesized dsDNA copy of the retrotransposon must transit the nuclear membrane. Once in the nucleus, integrase performs the integration of the dsDNA into the host genome. The protein is Transposon Ty1-JR1 Gag-Pol polyprotein (TY1B-JR1) of Saccharomyces cerevisiae (strain ATCC 204508 / S288c) (Baker's yeast).